The sequence spans 479 residues: Integrator complex subunit 12 (479 aa).

The interval 57-140 is disordered; the sequence is SKVSLPKMTK…SPIAFQTKDI (84 aa). Positions 70–90 are enriched in low complexity; sequence KSSSSSSASSSITTTSSSKSS. The segment covering 91 to 128 has biased composition (basic and acidic residues); sequence TSEKSKKESEKRTLEKIRVDPGEGVEPPKKPRLEKQDS. The segment at 161–217 adopts a PHD-type zinc-finger fold; that stretch reads GLACVVCRQMTVTSGNQLVECQECHNLYHQECHKPQVTDKDVNDPRLVWYCARCTRQ. Disordered stretches follow at residues 221 to 241, 274 to 293, and 305 to 479; these read MAQKTQKPPQKPAPALATTVP, TAASGNSSSSSSSSSSLPPG, and SNVG…KLKK. Composition is skewed to low complexity over residues 223-239 and 280-289; these read QKTQKPPQKPAPALATT and SSSSSSSSSS. The segment covering 305-328 has biased composition (polar residues); sequence SNVGPSSTKLSTSQSGNSKTSPAA. Residues 354–364 are compositionally biased toward gly residues; it reads SSAGSGNGNNG. Low complexity predominate over residues 399–411; it reads GSLSPGAAPSSSL. Residues 412–428 are compositionally biased toward gly residues; it reads GGNGGSGGNGAGNGGNS. Residues 429–451 show a composition bias toward low complexity; that stretch reads AGSSSSSGNNNNNGAKASADGKA. A compositionally biased stretch (basic residues) spans 466–479; the sequence is QMVKKKAAQKKLKK.

It belongs to the Integrator subunit 12 family. In terms of assembly, component of the Integrator complex, composed of core subunits INTS1, INTS2, INTS3, INTS4, INTS5, INTS6, INTS7, INTS8, INTS9/RC74, INTS10, INTS11/CPSF3L, INTS12, INTS13, INTS14 and INTS15. The core complex associates with protein phosphatase 2A subunits PPP2CA and PPP2R1A, to form the Integrator-PP2A (INTAC) complex.

The protein resides in the nucleus. Component of the integrator complex, a multiprotein complex that terminates RNA polymerase II (Pol II) transcription in the promoter-proximal region of genes. The integrator complex provides a quality checkpoint during transcription elongation by driving premature transcription termination of transcripts that are unfavorably configured for transcriptional elongation: the complex terminates transcription by (1) catalyzing dephosphorylation of the C-terminal domain (CTD) of Pol II subunit POLR2A/RPB1 and SUPT5H/SPT5, (2) degrading the exiting nascent RNA transcript via endonuclease activity and (3) promoting the release of Pol II from bound DNA. The integrator complex is also involved in terminating the synthesis of non-coding Pol II transcripts, such as enhancer RNAs (eRNAs), small nuclear RNAs (snRNAs), telomerase RNAs and long non-coding RNAs (lncRNAs). The chain is Integrator complex subunit 12 (ints12) from Danio rerio (Zebrafish).